We begin with the raw amino-acid sequence, 360 residues long: Vomilenine reductase (360 aa).

One can recognise an Enoyl reductase (ER) domain in the interval 23–351 (GLLSPFNFSR…KADVKYRFVI (329 aa)). Cys-50 lines the Zn(2+) pocket. Ser-52 provides a ligand contact to an alcohol. Ser-52 lines the NADP(+) pocket. Zn(2+) contacts are provided by Asp-53, His-72, Glu-73, Cys-103, Cys-106, Cys-109, Cys-117, and Cys-166. Position 72 (His-72) interacts with an alcohol. NADP(+) is bound by residues Leu-192, Gly-194, Leu-195, Ser-214, Thr-215, Ser-216, Lys-219, Lys-220, Val-277, Ala-279, Ser-301, and Arg-348.

The protein belongs to the zinc-containing alcohol dehydrogenase family. Class-P subfamily. Homodimer. It depends on Zn(2+) as a cofactor. As to expression, confined to roots.

It localises to the cytoplasm. It carries out the reaction (2R)-1,2-dihydrovomilenine + NADP(+) = vomilenine + NADPH + H(+). Its pathway is alkaloid biosynthesis; ajmaline biosynthesis. With respect to regulation, inhibited by EDTA and p-hydroxymercuribenzoate, a sulfhydryl reagent. In terms of biological role, alcohol dehydrogenase involved in the biosynthesis of ajmaline-type monoterpenoid indole alkaloids (MIAs) natural products, important plant-derived pharmaceuticals used in the therapy of heart disorders. Catalyzes the conversion of vomilenine to 1,2-dihydrovomilenine, an intermediate chemical in the biosynthesis of ajmaline. In Rauvolfia serpentina (Serpentine wood), this protein is Vomilenine reductase.